We begin with the raw amino-acid sequence, 108 residues long: Zinc metalloproteinase/disintegrin (108 aa).

The region spanning 1-19 (NEYQTYLTDRNPQCILNEP) is the Peptidase M12B domain. The propeptide occupies 20–35 (LRTDTVSTPVSGNELL). Residues 27–108 (TPVSGNELLE…ADCPRNGFYG (82 aa)) form the Disintegrin domain. 6 cysteine pairs are disulfide-bonded: C41-C56, C43-C51, C50-C73, C64-C70, C69-C94, and C82-C101. A Cell attachment site; atypical (KGD) motif is present at residues 86-88 (KGD).

It belongs to the venom metalloproteinase (M12B) family. P-II subfamily. P-IIa sub-subfamily. In terms of assembly, monomeric (disintegrin). It depends on Zn(2+) as a cofactor. Expressed by the venom gland.

It localises to the secreted. Its function is as follows. Impairs hemostasis in the envenomed animal. Functionally, inhibits platelet aggregation induced by ADP, thrombin, platelet-activating factor and collagen. Acts by inhibiting fibrinogen interaction with platelet receptors GPIIb/GPIIIa (ITGA2B/ITGB3). This is Zinc metalloproteinase/disintegrin from Gloydius brevicauda (Korean slamosa snake).